The sequence spans 159 residues: U1 small nuclear ribonucleoprotein C (159 aa).

A Matrin-type zinc finger spans residues 4 to 36 (FYCDYCDTYLTHDSPSVRKTHCSGRKHKENVKD). Phosphotyrosine is present on Tyr-8. Position 17 is a phosphoserine (Ser-17). Lys-52 carries the N6-acetyllysine modification. 2 disordered regions span residues 62 to 96 (IPPT…PAPH) and 140 to 159 (RPPA…RPDR). Positions 63–92 (PPTPFSAPPPAGAMIPPPPSLPGPPRPGMM) are enriched in pro residues.

Belongs to the U1 small nuclear ribonucleoprotein C family. Component of the U1 snRNP. The U1 snRNP is composed of the U1 snRNA and the 7 core Sm proteins SNRPB, SNRPD1, SNRPD2, SNRPD3, SNRPE, SNRPF and SNRPG that assemble in a heptameric protein ring on the Sm site of the small nuclear RNA to form the core snRNP, and at least 3 U1 snRNP-specific proteins SNRNP70/U1-70K, SNRPA/U1-A and SNRPC/U1-C. SNRPC/U1-C interacts with U1 snRNA and the 5' splice-site region of the pre-mRNA. Interacts (via N-terminus) with TIA1 (via C-terminus); thereby promoting spliceosomal U1 snRNP recruitment to 5' splice sites.

It is found in the nucleus. Its function is as follows. Component of the spliceosomal U1 snRNP, which is essential for recognition of the pre-mRNA 5' splice-site and the subsequent assembly of the spliceosome. SNRPC/U1-C is directly involved in initial 5' splice-site recognition for both constitutive and regulated alternative splicing. The interaction with the 5' splice-site seems to precede base-pairing between the pre-mRNA and the U1 snRNA. Stimulates commitment or early (E) complex formation by stabilizing the base pairing of the 5' end of the U1 snRNA and the 5' splice-site region. This chain is U1 small nuclear ribonucleoprotein C, found in Homo sapiens (Human).